Here is a 103-residue protein sequence, read N- to C-terminus: MSLSEQAILEQDKNIVSNIVQDILCEQISIEKTELNLDLYIYEDLKIDSLDLVEIIKQIEEKFDIKIDDSKILYMNTLEEFIDFTLQTIYMKHGFEYLQNKQF.

The Carrier domain maps to 14 to 89 (NIVSNIVQDI…EFIDFTLQTI (76 aa)). Position 49 is an O-(pantetheine 4'-phosphoryl)serine (Ser49).

It belongs to the acyl carrier protein (ACP) family. In terms of processing, 4'-phosphopantetheine is transferred from CoA to a specific serine of apo-ACP by AcpS. This modification is essential for activity because fatty acids are bound in thioester linkage to the sulfhydryl of the prosthetic group.

It localises to the plastid. The protein resides in the cyanelle. It participates in lipid metabolism; fatty acid biosynthesis. Its function is as follows. Carrier of the growing fatty acid chain in fatty acid biosynthesis. This Cyanophora paradoxa protein is Acyl carrier protein.